Reading from the N-terminus, the 377-residue chain is Probable protein phosphatase 2C 7 (377 aa).

2 disordered regions span residues 1-68 (MAAH…GKAA) and 80-99 (TTVA…EDDE). Residues 21–39 (PPAAEAEAAAAAAAIARAA) show a composition bias toward low complexity. Residues 51-63 (GVRHPLKHRRFRA) are compositionally biased toward basic residues. Residues 80-89 (TTVAEATATG) are compositionally biased toward low complexity. The PPM-type phosphatase domain occupies 115–361 (SCGYSSFRGR…DNITCIVVKF (247 aa)). The Mn(2+) site is built by Asp151, Gly152, Asp313, and Asp352.

The protein belongs to the PP2C family. Mg(2+) is required as a cofactor. Mn(2+) serves as cofactor.

It carries out the reaction O-phospho-L-seryl-[protein] + H2O = L-seryl-[protein] + phosphate. The catalysed reaction is O-phospho-L-threonyl-[protein] + H2O = L-threonyl-[protein] + phosphate. The protein is Probable protein phosphatase 2C 7 of Oryza sativa subsp. japonica (Rice).